Reading from the N-terminus, the 266-residue chain is Glutamate racemase (266 aa).

Residues Asp9 to Ser10 and Tyr41 to Gly42 contribute to the substrate site. The Proton donor/acceptor role is filled by Cys72. Asn73 to Thr74 serves as a coordination point for substrate. Cys184 functions as the Proton donor/acceptor in the catalytic mechanism. Residue Thr185–His186 participates in substrate binding.

It belongs to the aspartate/glutamate racemases family.

It carries out the reaction L-glutamate = D-glutamate. It participates in cell wall biogenesis; peptidoglycan biosynthesis. Functionally, provides the (R)-glutamate required for cell wall biosynthesis. This chain is Glutamate racemase, found in Staphylococcus carnosus (strain TM300).